The following is a 209-amino-acid chain: Protein ASG7 (209 aa).

Over 1-49 (MTTLASSIEHKTKHLAAPFENDENPWMKKYCCQCKSCKMSVPVQPWLPR) the chain is Lumenal. Residues 50 to 70 (FFVFGILCPVFWLVNLLAWWF) form a helical membrane-spanning segment. Topologically, residues 71–184 (LQYWQPHELE…LLRKTFRDWN (114 aa)) are cytoplasmic. A phosphoserine mark is found at S121, S123, and S125. T153 is modified (phosphothreonine). The helical transmembrane segment at 185–205 (LRSLLGLLIDSILIIFVVLLC) threads the bilayer. The Lumenal portion of the chain corresponds to 206-209 (KKSR).

The protein localises to the endomembrane system. Required for receptor inhibition of inappropriately expressed a-factor receptor (STE3) in MAT a cells. Inhibits signaling by relocalizing the G protein beta-gamma (STE4-STE18) subunit to intracellular membranes. May also be a mechanism for the down-regulation of the mating pheromone response after the zygotic fusion event, promoting the transition of the new diploid cell to vegetative growth. The chain is Protein ASG7 (ASG7) from Saccharomyces cerevisiae (strain ATCC 204508 / S288c) (Baker's yeast).